Reading from the N-terminus, the 540-residue chain is Putative serine protease F56F10.1 (540 aa).

A signal peptide spans 1–16 (MLRNLLLLLLPLLIEA). Asn58 and Asn87 each carry an N-linked (GlcNAc...) asparagine glycan. The active-site Charge relay system is Ser182. Residues Asn270, Asn300, Asn317, Asn343, Asn441, and Asn449 are each glycosylated (N-linked (GlcNAc...) asparagine). The Charge relay system role is filled by Asp453. N-linked (GlcNAc...) asparagine glycosylation occurs at Asn475. His479 serves as the catalytic Charge relay system.

It belongs to the peptidase S28 family.

This Caenorhabditis elegans protein is Putative serine protease F56F10.1.